The sequence spans 334 residues: Ornithine carbamoyltransferase (334 aa).

Residues 56–59, Q83, R107, and 134–137 contribute to the carbamoyl phosphate site; these read STRT and HPTQ. Residues N168, D232, and 236-237 each bind L-ornithine; that span reads SM. Carbamoyl phosphate-binding positions include 274-275 and R320; that span reads CL.

Belongs to the aspartate/ornithine carbamoyltransferase superfamily. OTCase family. Homotrimer.

Its subcellular location is the cytoplasm. The catalysed reaction is carbamoyl phosphate + L-ornithine = L-citrulline + phosphate + H(+). It functions in the pathway amino-acid biosynthesis; L-arginine biosynthesis; L-arginine from L-ornithine and carbamoyl phosphate: step 1/3. Its function is as follows. Reversibly catalyzes the transfer of the carbamoyl group from carbamoyl phosphate (CP) to the N(epsilon) atom of ornithine (ORN) to produce L-citrulline. The chain is Ornithine carbamoyltransferase (argI) from Salmonella typhimurium (strain LT2 / SGSC1412 / ATCC 700720).